We begin with the raw amino-acid sequence, 150 residues long: D-aminoacyl-tRNA deacylase (150 aa).

A Gly-cisPro motif, important for rejection of L-amino acids motif is present at residues 136–137 (GP).

It belongs to the DTD family. In terms of assembly, homodimer.

It is found in the cytoplasm. It carries out the reaction glycyl-tRNA(Ala) + H2O = tRNA(Ala) + glycine + H(+). The enzyme catalyses a D-aminoacyl-tRNA + H2O = a tRNA + a D-alpha-amino acid + H(+). An aminoacyl-tRNA editing enzyme that deacylates mischarged D-aminoacyl-tRNAs. Also deacylates mischarged glycyl-tRNA(Ala), protecting cells against glycine mischarging by AlaRS. Acts via tRNA-based rather than protein-based catalysis; rejects L-amino acids rather than detecting D-amino acids in the active site. By recycling D-aminoacyl-tRNA to D-amino acids and free tRNA molecules, this enzyme counteracts the toxicity associated with the formation of D-aminoacyl-tRNA entities in vivo and helps enforce protein L-homochirality. This Staphylococcus aureus (strain MRSA252) protein is D-aminoacyl-tRNA deacylase.